A 533-amino-acid polypeptide reads, in one-letter code: Thromboxane-A synthase (533 aa).

Over 1 to 10 (MEALGFLKLE) the chain is Cytoplasmic. A helical transmembrane segment spans residues 11 to 31 (VNGPMVTVALSVALLALLKWY). Over 32–75 (STSAFSRLEKLGLRHPKPSPFIGNLMFFRQGFWESQMELRKLYG) the chain is Lumenal. A helical transmembrane segment spans residues 76–96 (PLCGYYLGRRMFIVISEPDMI). Over 97 to 223 (KQVLVENFSN…KRFFEFCIPR (127 aa)) the chain is Cytoplasmic. The helical transmembrane segment at 224-244 (PILVLLLSFPSIMVPLARILP) threads the bilayer. Topologically, residues 245 to 335 (NKNRDELNGF…LTVDEIVGQA (91 aa)) are lumenal. The helical transmembrane segment at 336-356 (FIFLIAGYEIVTNTLSFATYL) threads the bilayer. At 357-533 (LATNPDCQEK…NGVYIKIVSR (177 aa)) the chain is on the cytoplasmic side. Cys479 contacts heme.

This sequence belongs to the cytochrome P450 family. In terms of assembly, monomer. It depends on heme as a cofactor.

It localises to the endoplasmic reticulum membrane. It carries out the reaction prostaglandin H2 = thromboxane A2. The enzyme catalyses prostaglandin H2 = (12S)-hydroxy-(5Z,8E,10E)-heptadecatrienoate + malonaldehyde. It catalyses the reaction a hydroperoxyeicosatetraenoate = an oxoeicosatetraenoate + H2O. The catalysed reaction is (15S)-hydroperoxy-(5Z,8Z,11Z,13E)-eicosatetraenoate = 15-oxo-(5Z,8Z,11Z,13E)-eicosatetraenoate + H2O. It carries out the reaction (15S)-hydroperoxy-(5Z,8Z,11Z,13E)-eicosatetraenoate + AH2 = (15S)-hydroxy-(5Z,8Z,11Z,13E)-eicosatetraenoate + A + H2O. Catalyzes the conversion of prostaglandin H2 (PGH2) to thromboxane A2 (TXA2), a potent inducer of blood vessel constriction and platelet aggregation. Also cleaves PGH2 to 12-hydroxy-heptadecatrienoicacid (12-HHT) and malondialdehyde, which is known to act as a mediator of DNA damage. 12-HHT and malondialdehyde are formed stoichiometrically in the same amounts as TXA2. Additionally, displays dehydratase activity, toward (15S)-hydroperoxy-(5Z,8Z,11Z,13E)-eicosatetraenoate (15(S)-HPETE) producing 15-KETE and 15-HETE. The polypeptide is Thromboxane-A synthase (TBXAS1) (Macaca fascicularis (Crab-eating macaque)).